A 333-amino-acid chain; its full sequence is Serine/threonine-protein phosphatase PP1-beta (333 aa).

Residues Asp63, His65, Asp91, and Asn123 each contribute to the Mn(2+) site. Residue His124 is the Proton donor of the active site. Positions 172 and 247 each coordinate Mn(2+). Positions 306 to 333 (GAGGVGSNRPVTPPRNAPAAQPKKGAKK) are disordered. The segment covering 322–333 (APAAQPKKGAKK) has biased composition (low complexity).

It belongs to the PPP phosphatase family. PP-1 subfamily. Interacts with lab-1; the interaction is direct. Interacts with knl-1; the interaction is direct. The cofactor is Mn(2+).

The protein localises to the cytoplasm. Its subcellular location is the nucleus. The enzyme catalyses O-phospho-L-seryl-[protein] + H2O = L-seryl-[protein] + phosphate. The catalysed reaction is O-phospho-L-threonyl-[protein] + H2O = L-threonyl-[protein] + phosphate. Its function is as follows. Serine/threonine-protein phosphatase essential for chromosomal dynamics during meiosis and mitosis. Antagonizes the function of air-2 in the regulation of chromosome cohesion. Dephosphorylates histone H3 at 'Ser-10'. Also involved in the activation of chloride channel clh-3 during cell swelling and meiotic maturation. Essential for embryogenesis. The chain is Serine/threonine-protein phosphatase PP1-beta (gsp-2) from Caenorhabditis briggsae.